The following is a 172-amino-acid chain: MIGIPFHLRPPPGRTLHSLVRTIASTKPADLSGTQDKSTRQKINFHELKHPSKVPQRPNKSTIDGQSTPTRIPVDTQTVQLLERLSLVDLDSAEAHRTLEDAIEFASQILSVDTDGVEPLNTVLERERLTLREDRVSDGKIQQDVLRNACVTEEENFVAPPGNIPLEQEPRK.

Positions lysine 49–arginine 71 are disordered. Residues proline 58–arginine 71 are compositionally biased toward polar residues.

This sequence belongs to the GatC family. As to quaternary structure, subunit of the heterotrimeric GatCAB amidotransferase (AdT) complex, composed of A, B and C subunits.

It is found in the mitochondrion. It catalyses the reaction L-glutamyl-tRNA(Gln) + L-glutamine + ATP + H2O = L-glutaminyl-tRNA(Gln) + L-glutamate + ADP + phosphate + H(+). Its function is as follows. Allows the formation of correctly charged Gln-tRNA(Gln) through the transamidation of misacylated Glu-tRNA(Gln) in the mitochondria. The reaction takes place in the presence of glutamine and ATP through an activated gamma-phospho-Glu-tRNA(Gln). This Culex quinquefasciatus (Southern house mosquito) protein is Glutamyl-tRNA(Gln) amidotransferase subunit C-3, mitochondrial.